The primary structure comprises 371 residues: Collectin-46 (371 aa).

Positions methionine 1–glycine 20 are cleaved as a signal peptide. Residues proline 43–leucine 215 are disordered. Residues glycine 46–alanine 216 enclose the Collagen-like domain. Positions aspartate 51 to aspartate 65 are enriched in basic and acidic residues. Asparagine 90 carries an N-linked (GlcNAc...) asparagine glycan. Residues proline 113 to proline 128 are compositionally biased toward low complexity. Residues glycine 139 to glycine 148 are compositionally biased toward gly residues. Over residues alanine 170–alanine 191 the composition is skewed to low complexity. The segment covering lysine 198–lysine 210 has biased composition (basic and acidic residues). Positions arginine 201–aspartate 203 match the Cell attachment site motif. A C-type lectin domain is found at glutamine 273 to phenylalanine 371. 2 disulfide bridges follow: cysteine 275-cysteine 369 and cysteine 347-cysteine 361.

It belongs to the SFTPD family. As to quaternary structure, oligomeric complex of 4 set of homotrimers. Hydroxylated. Highly expressed in thymus and liver.

The protein resides in the secreted. The protein is Collectin-46 (CL46) of Bos taurus (Bovine).